The sequence spans 833 residues: Toll-like receptor 4 (833 aa).

An N-terminal signal peptide occupies residues 1–23 (MMPPTRLAGTLIPAMAFLSCLRP). An LRRNT domain is found at 24–54 (ESWDPCVEVVPNITYQCMDLNLHKIPDNIPS). Over 24 to 632 (ESWDPCVEVV…FRNATCQVRK (609 aa)) the chain is Extracellular. An intrachain disulfide couples Cys-29 to Cys-40. An N-linked (GlcNAc...) asparagine glycan is attached at Asn-35. LRR repeat units lie at residues 55–76 (STKDLDMSFNPLRNLGSHSFSN), 79–100 (ELQVLDLSRCEIQIIEDDAYQG), 103–124 (HLSILILTGNPIQRLFPGAFSG), 127–148 (SLQTLVAVETNIASLEDFPIGH), and 151–172 (TLKELNVAHNLIHSFKLPEYFS). The N-linked (GlcNAc...) asparagine glycan is linked to Asn-173. LRR repeat units follow at residues 176 to 197 (NLEYLDLSNNKIQNIYHKDLQV), 205 to 225 (NLSLDLSLNPLDFIQPGAFKE), and 227 to 236 (KLRELTLRSN). Asn-205 carries N-linked (GlcNAc...) asparagine glycosylation. A glycan (N-linked (GlcNAc...) asparagine) is linked at Asn-238. Cysteines 281 and 306 form a disulfide. Asn-309 is a glycosylation site (N-linked (GlcNAc...) asparagine). LRR repeat units follow at residues 352 to 373 (PLKELVFSANEVRNAFTQVKLE), 374 to 394 (SLEFLDLSRNDFSLKSCCSER), 400 to 420 (RLKHLDLSFNNIITISSNFLG), 423 to 444 (QLEYLDFQHSSLKQVSDFSVFL), 448 to 456 (NLRYLDISY), 472 to 495 (SLQILKMAGNSFQDNFLPNIFMEL), 497 to 518 (NLTILDLSDCQLEQVSQVAFNS), 521 to 542 (KLQLLNMSHNHLLSLDTLPYEP), and 545 to 565 (SLQTLDCSFNRIVASKEQELR). A disulfide bridge links Cys-390 with Cys-391. 2 N-linked (GlcNAc...) asparagine glycosylation sites follow: Asn-497 and Asn-526. Residues Asn-570 and Asn-575 are each glycosylated (N-linked (GlcNAc...) asparagine). In terms of domain architecture, LRRCT spans 579–630 (NDFACVCEHQSFLQWVKDQRQLLVEVEQMVCAKPLDMQGMPMLNFRNATCQV). Disulfide bonds link Cys-583–Cys-609 and Cys-585–Cys-628. Asn-625 is a glycosylation site (N-linked (GlcNAc...) asparagine). The helical transmembrane segment at 633 to 653 (TIITGSVFTVLLVFLVVVLVY) threads the bilayer. Topologically, residues 654–833 (KFYFHLMLLA…PEGMADAEGS (180 aa)) are cytoplasmic. Positions 673 to 816 (STYDAFVIYS…IFWRRLRKAL (144 aa)) constitute a TIR domain.

The protein belongs to the Toll-like receptor family. In terms of assembly, belongs to the lipopolysaccharide (LPS) receptor, a multi-protein complex containing at least CD14, LY96 and TLR4. Binding to bacterial LPS leads to homodimerization. Interacts with LY96 via the extracellular domain. Interacts with MYD88 and TIRAP via their respective TIR domains. Interacts with TICAM2. Interacts with NOX4. Interacts with CNPY3 and HSP90B1; this interaction is required for proper folding in the endoplasmic reticulum. Interacts with MAP3K21; this interaction leads to negative regulation of TLR4 signaling. Interacts with CD36, following CD36 stimulation by oxLDL or amyloid-beta 42, and forms a heterodimer with TLR6. The trimeric complex is internalized and triggers inflammatory response. LYN kinase activity facilitates TLR4-TLR6 heterodimerization and signal initiation. Interacts with TICAM1 in response to LPS in a WDFY1-dependent manner. Interacts with WDFY1 in response to LPS. Interacts with SMPDL3B. Interacts with CEACAM1; upon lipopolysaccharide stimulation, forms a complex including TLR4 and the phosphorylated form of SYK and CEACAM1, which in turn, recruits PTPN6 that dephosphorylates SYK, reducing the production of reactive oxygen species (ROS) and lysosome disruption, which in turn, reduces the activity of the inflammasome. Interacts with RFTN1; the interaction occurs in response to lipopolysaccharide stimulation. Interacts with SCIMP; the interaction occurs in response to lipopolysaccharide stimulation and is enhanced by phosphorylation of SCIMP by LYN. This interaction facilitates the phosphorylation of TLR4 by LYN which elicits a selective cytokine response in macrophages. Interacts with TRAF3IP3. Interacts with TREM1; this interaction enhances TLR4-mediated inflammatory response. Interacts with ZG16B/PAUF. Interacts with CD82; this interaction inhibits TLR4-mediated signaling pathway. In terms of processing, phosphorylated on tyrosine residues by LYN after binding lipopolysaccharide. Ubiquitinated by RNF128 via 'Lys-28'-linked polyubiquitin chains, leading to proteasomal degradation.

It localises to the cell membrane. It is found in the early endosome. The protein localises to the cell projection. Its subcellular location is the ruffle. In terms of biological role, transmembrane receptor that functions as a pattern recognition receptor recognizing pathogen- and damage-associated molecular patterns (PAMPs and DAMPs) to induce innate immune responses via downstream signaling pathways. At the plasma membrane, cooperates with LY96 to mediate the innate immune response to bacterial lipopolysaccharide (LPS). Also involved in LPS-independent inflammatory responses triggered by free fatty acids, such as palmitate, and Ni(2+). Mechanistically, acts via MYD88, TIRAP and TRAF6, leading to NF-kappa-B activation, cytokine secretion and the inflammatory response. Alternatively, CD14-mediated TLR4 internalization via endocytosis is associated with the initiation of a MYD88-independent signaling via the TICAM1-TBK1-IRF3 axis leading to type I interferon production. In addition to the secretion of proinflammatory cytokines, initiates the activation of NLRP3 inflammasome and formation of a positive feedback loop between autophagy and NF-kappa-B signaling cascade. In complex with TLR6, promotes inflammation in monocytes/macrophages by associating with TLR6 and the receptor CD86. Upon ligand binding, such as oxLDL or amyloid-beta 42, the TLR4:TLR6 complex is internalized and triggers inflammatory response, leading to NF-kappa-B-dependent production of CXCL1, CXCL2 and CCL9 cytokines, via MYD88 signaling pathway, and CCL5 cytokine, via TICAM1 signaling pathway. In myeloid dendritic cells, vesicular stomatitis virus glycoprotein G but not LPS promotes the activation of IRF7, leading to type I IFN production in a CD14-dependent manner. This chain is Toll-like receptor 4 (TLR4), found in Felis catus (Cat).